The primary structure comprises 353 residues: Ion-translocating oxidoreductase complex subunit D (353 aa).

Transmembrane regions (helical) follow at residues 20–40 (IMLLVLIATLPGIAAQWYYFG), 44–64 (IIQVLIASVAALVAEAAILHL), 77–108 (SALLTALLLGVSIPSLAPWWMVTIGTVFAIII), and 123–143 (PAMVGYVVLVISFPVQMTSWL). At threonine 187 the chain carries FMN phosphoryl threonine. Helical transmembrane passes span 214 to 234 (VIAGIGWQWVNVGFLLGGVFL), 242 to 262 (WHIPVSFIASLAFFATLGWLL), 267 to 287 (LVTPMIHLFSGATMLGAFFIA), and 301 to 318 (LLYGVLIGLLTWLIRSYG).

The protein belongs to the NqrB/RnfD family. The complex is composed of six subunits: RnfA, RnfB, RnfC, RnfD, RnfE and RnfG. It depends on FMN as a cofactor.

Its subcellular location is the cell inner membrane. Part of a membrane-bound complex that couples electron transfer with translocation of ions across the membrane. The polypeptide is Ion-translocating oxidoreductase complex subunit D (Erwinia tasmaniensis (strain DSM 17950 / CFBP 7177 / CIP 109463 / NCPPB 4357 / Et1/99)).